Reading from the N-terminus, the 550-residue chain is Hydroxylamine reductase (550 aa).

[2Fe-2S] cluster contacts are provided by C3, C6, C18, and C25. 8 residues coordinate hybrid [4Fe-2O-2S] cluster: H249, E273, C317, C405, C433, C458, E492, and K494. Residue C405 is modified to Cysteine persulfide.

The protein belongs to the HCP family. [2Fe-2S] cluster serves as cofactor. Requires hybrid [4Fe-2O-2S] cluster as cofactor.

The protein localises to the cytoplasm. The enzyme catalyses A + NH4(+) + H2O = hydroxylamine + AH2 + H(+). Catalyzes the reduction of hydroxylamine to form NH(3) and H(2)O. In Shigella boydii serotype 18 (strain CDC 3083-94 / BS512), this protein is Hydroxylamine reductase.